Here is a 316-residue protein sequence, read N- to C-terminus: MNELDGIKQFTTVVADSCDIESIRHYHPQDATANPSLLLKAAGLSQYEHLIDDAIAWGKKNGKTQEQQVVAACDKLAVNFGAEILKIVPGCVSTEVDARLSFDKEKSIEKARHLVDLYQQQGVEKSRILIKLASTWEGIRAAEELEKEGINCNLTLLFSFTQARACAEAGVFLISPFVGRIYDWYQARKPMDPYVVEEDPGVKSVRNIYDYYKQHHYETIVMGASFRRTEQILALTGCDRLTIAPNLLKELQEKVSPVVRKLIPPSQTFPRPAPMSEAEFRWEHNQDAMAVEKLSEGIRLFAVDQRKLEDLLAAKL.

The active-site Schiff-base intermediate with substrate is the Lys131.

It belongs to the transaldolase family. Type 1 subfamily. As to quaternary structure, homodimer.

The protein localises to the cytoplasm. The catalysed reaction is D-sedoheptulose 7-phosphate + D-glyceraldehyde 3-phosphate = D-erythrose 4-phosphate + beta-D-fructose 6-phosphate. It participates in carbohydrate degradation; pentose phosphate pathway; D-glyceraldehyde 3-phosphate and beta-D-fructose 6-phosphate from D-ribose 5-phosphate and D-xylulose 5-phosphate (non-oxidative stage): step 2/3. In terms of biological role, transaldolase is important for the balance of metabolites in the pentose-phosphate pathway. The chain is Transaldolase A from Shigella flexneri.